A 216-amino-acid polypeptide reads, in one-letter code: Cyclo(L-leucyl-L-leucyl) synthase (216 aa).

Ser14 acts as the Nucleophile in catalysis. Residues Asn17, 155 to 159 (YIFDE), and Tyr179 each bind substrate.

The protein belongs to the CDPS family.

It catalyses the reaction 2 L-leucyl-tRNA(Leu) = cyclo(L-leucyl-L-leucyl) + 2 tRNA(Leu) + 2 H(+). Functionally, it uses activated amino acids in the form of aminoacyl-tRNAs (aa-tRNAs) as substrates to catalyze the ATP-independent formation of cyclodipeptides which are intermediates in diketopiperazine (DKP) biosynthetic pathways. Catalyzes the formation of cyclo(L-Leu-L-Leu) (cLL) from L-leucyl-tRNA(Leu). Can incorporate various nonpolar residues, such as L-leucine and L-methionine, into cyclodipeptides. This chain is Cyclo(L-leucyl-L-leucyl) synthase, found in Corynebacterium jeikeium (strain K411).